Consider the following 311-residue polypeptide: Peptide methionine sulfoxide reductase MsrA/MsrB (311 aa).

The segment at 1–155 (MAEIYLAGGC…PGGYCHINVN (155 aa)) is peptide methionine sulfoxide reductase A. Cys10 is an active-site residue. One can recognise a MsrB domain in the interval 172-295 (DAELKEQLTQ…NSAALRFIPK (124 aa)). Catalysis depends on Cys284, which acts as the Nucleophile.

In the N-terminal section; belongs to the MsrA Met sulfoxide reductase family. The protein in the C-terminal section; belongs to the MsrB Met sulfoxide reductase family.

It catalyses the reaction L-methionyl-[protein] + [thioredoxin]-disulfide + H2O = L-methionyl-(S)-S-oxide-[protein] + [thioredoxin]-dithiol. It carries out the reaction [thioredoxin]-disulfide + L-methionine + H2O = L-methionine (S)-S-oxide + [thioredoxin]-dithiol. The catalysed reaction is L-methionyl-[protein] + [thioredoxin]-disulfide + H2O = L-methionyl-(R)-S-oxide-[protein] + [thioredoxin]-dithiol. In terms of biological role, has an important function as a repair enzyme for proteins that have been inactivated by oxidation. Catalyzes the reversible oxidation-reduction of methionine sulfoxide in proteins to methionine. Involved in protection against oxidative stress when the bacterium enters the host bloodstream and required for maximal growth under aerobic and anaerobic conditions. This Streptococcus gordonii (strain Challis / ATCC 35105 / BCRC 15272 / CH1 / DL1 / V288) protein is Peptide methionine sulfoxide reductase MsrA/MsrB (msrAB).